Here is a 137-residue protein sequence, read N- to C-terminus: Putative pre-16S rRNA nuclease (137 aa).

The protein belongs to the YqgF nuclease family.

The protein resides in the cytoplasm. Functionally, could be a nuclease involved in processing of the 5'-end of pre-16S rRNA. The polypeptide is Putative pre-16S rRNA nuclease (Bacillus cereus (strain B4264)).